Consider the following 156-residue polypeptide: Small ribosomal subunit protein uS7 (156 aa).

Belongs to the universal ribosomal protein uS7 family. Part of the 30S ribosomal subunit. Contacts proteins S9 and S11.

Its function is as follows. One of the primary rRNA binding proteins, it binds directly to 16S rRNA where it nucleates assembly of the head domain of the 30S subunit. Is located at the subunit interface close to the decoding center, probably blocks exit of the E-site tRNA. This is Small ribosomal subunit protein uS7 from Clostridium tetani (strain Massachusetts / E88).